The sequence spans 475 residues: Glycogen synthase (475 aa).

Lys15 serves as a coordination point for ADP-alpha-D-glucose.

It belongs to the glycosyltransferase 1 family. Bacterial/plant glycogen synthase subfamily.

It catalyses the reaction [(1-&gt;4)-alpha-D-glucosyl](n) + ADP-alpha-D-glucose = [(1-&gt;4)-alpha-D-glucosyl](n+1) + ADP + H(+). It participates in glycan biosynthesis; glycogen biosynthesis. In terms of biological role, synthesizes alpha-1,4-glucan chains using ADP-glucose. This chain is Glycogen synthase, found in Anaeromyxobacter sp. (strain K).